Here is a 195-residue protein sequence, read N- to C-terminus: Putative Tricorn-like protease N-terminal subunit (195 aa).

This sequence belongs to the peptidase S41B family.

Its subcellular location is the cytoplasm. Degrades oligopeptides in a sequential manner. The sequence is that of Putative Tricorn-like protease N-terminal subunit (triN) from Sulfurisphaera tokodaii (strain DSM 16993 / JCM 10545 / NBRC 100140 / 7) (Sulfolobus tokodaii).